The sequence spans 190 residues: RNA pyrophosphohydrolase (190 aa).

A Nudix hydrolase domain is found at 6-149 (GYRPNVGIVL…KRGVYARALC (144 aa)). Positions 38 to 59 (GGMHSDETPVEAMYRELNEETG) match the Nudix box motif.

This sequence belongs to the Nudix hydrolase family. RppH subfamily. The cofactor is a divalent metal cation.

Accelerates the degradation of transcripts by removing pyrophosphate from the 5'-end of triphosphorylated RNA, leading to a more labile monophosphorylated state that can stimulate subsequent ribonuclease cleavage. This chain is RNA pyrophosphohydrolase, found in Xylella fastidiosa (strain 9a5c).